A 121-amino-acid chain; its full sequence is Small ribosomal subunit protein bS16 (121 aa).

Basic and acidic residues predominate over residues 97-114 (LAKAKTKDEENDNSKVES). The disordered stretch occupies residues 97–121 (LAKAKTKDEENDNSKVESEGNEAES).

The protein belongs to the bacterial ribosomal protein bS16 family.

The polypeptide is Small ribosomal subunit protein bS16 (Prochlorococcus marinus (strain AS9601)).